Here is a 470-residue protein sequence, read N- to C-terminus: Probable citrate synthase, mitochondrial (470 aa).

Residues His297, His351, and Asp406 contribute to the active site.

This sequence belongs to the citrate synthase family. Homodimer.

Its subcellular location is the mitochondrion matrix. It catalyses the reaction oxaloacetate + acetyl-CoA + H2O = citrate + CoA + H(+). It participates in carbohydrate metabolism; tricarboxylic acid cycle; isocitrate from oxaloacetate: step 1/2. This is Probable citrate synthase, mitochondrial from Leishmania major.